A 56-amino-acid chain; its full sequence is Mitoregulin (56 aa).

Over 2 to 9 (ADVSERTL) the chain is Mitochondrial matrix. Residues 10 to 27 (QLSVLVAFASGVLLGWQA) form a helical membrane-spanning segment. Residues 28-56 (NRLRRRYLDWRKRRLQDKLAATQKKLDLA) lie on the Mitochondrial intermembrane side of the membrane.

Interacts with mitochondrial trifunctional enzyme, a heterotetrameric complex composed of 2 HADHA subunits and 2 HADHB subunits. Interacts with cytochrome b5 reductase CYB5R3; the interaction is required to maintain cellular lipid composition and leads to stimulation of mitochondrial respiratory complex I activity. Interacts with ATP synthase subunit ATP5F1B/ATP5B.

The protein resides in the mitochondrion inner membrane. Functionally, positively regulates mitochondrial complex assembly and/or stability. Increases mitochondrial membrane potential while decreasing mitochondrial reactive oxygen species. Increases mitochondrial respiration rate. Increased mitochondrial respiratory activity promotes myogenic differentiation which facilitates muscle growth and regeneration. Increases mitochondrial calcium retention capacity. Plays a role in maintenance of cellular lipid composition through its interaction with cytochrome b5 reductase CYB5R3 which is required for mitochondrial respiratory complex I activity. Interacts with the mitochondrial trifunctional enzyme complex (MTE) and enhances fatty acid beta-oxidation. Not required for MTE formation or stability. Modulates triglyceride clearance in adipocytes through its role in regulating fatty acid beta-oxidation and lipolysis. The sequence is that of Mitoregulin from Homo sapiens (Human).